The chain runs to 718 residues: MTMFNKIVKEFQWGQHKVRLETGEIARQASGAVIVDVEDTVVLATVVGAKTAKPGQDFFPLTVDYLEKTYAAGKIPGGFFRREGRPSEGETLISRLIDRPLRPLFPEGFYNEVQVVIHVLSLNPEIPADIPALIGASAALAVSGLPFNGPVGAARVAYINNEYVLNPTRPQMKESALDLIVAGTERAVLMVESEAQQLSEEVMLGGVVFGHEQMQIAIDAIHDLVREGGKPEWDWQPAAKNEPLIARVTELAQADLLAAYQLRDKQARSAKLKEVYAATSKKLEEDAAAGGTVAADKATVGNVLFDIEAKIVRTQILNGEPRIDGRDTRTVRPIEIRTGVLPRTHGSALFTRGETQAMVVATLGTKGDEQNIDALEGEYRERFMLHYNMPPFATGETGRVGSPKRREIGHGRLAKRALAACLPSADEFGYSIRVVSEITESNGSSSMASVCGGCLALMDAGVPMKAHVAGIAMGLILEGNKFAVLTDILGDEDHLGDMDFKVAGTEQGVTALQMDIKIQGITKEIMQVALAQAKEGRMHILSKMTSAVSGANTVLSDYAPRMITIKINPEKIRDVIGKGGSVIRALTEETGTTIDISDDGVVTIASTSSEGMAEAKKRIENITLEVEVGQVYEGTVLKLLDFGAIVNILPGKDGLLHISEIANERIKDINDYLKDGQQVKVKVIQTDEKGRVRLSAKALLNEGANGASGAPQGEPTPQ.

2 residues coordinate Mg(2+): Asp493 and Asp499. The region spanning 560 to 619 (PRMITIKINPEKIRDVIGKGGSVIRALTEETGTTIDISDDGVVTIASTSSEGMAEAKKRI) is the KH domain. The 69-residue stretch at 629–697 (GQVYEGTVLK…EKGRVRLSAK (69 aa)) folds into the S1 motif domain.

It belongs to the polyribonucleotide nucleotidyltransferase family. Mg(2+) serves as cofactor.

Its subcellular location is the cytoplasm. The enzyme catalyses RNA(n+1) + phosphate = RNA(n) + a ribonucleoside 5'-diphosphate. Functionally, involved in mRNA degradation. Catalyzes the phosphorolysis of single-stranded polyribonucleotides processively in the 3'- to 5'-direction. The protein is Polyribonucleotide nucleotidyltransferase of Paraburkholderia phytofirmans (strain DSM 17436 / LMG 22146 / PsJN) (Burkholderia phytofirmans).